The chain runs to 327 residues: Pyruvate dehydrogenase E1 component subunit beta (327 aa).

Glutamate 60 lines the thiamine diphosphate pocket. 4 residues coordinate K(+): valine 113, alanine 161, isoleucine 162, and glutamate 164.

As to quaternary structure, heterodimer of an alpha and a beta chain. The cofactor is thiamine diphosphate.

The protein localises to the plastid. It is found in the chloroplast. The catalysed reaction is N(6)-[(R)-lipoyl]-L-lysyl-[protein] + pyruvate + H(+) = N(6)-[(R)-S(8)-acetyldihydrolipoyl]-L-lysyl-[protein] + CO2. In terms of biological role, the pyruvate dehydrogenase complex catalyzes the overall conversion of pyruvate to acetyl-CoA and CO(2). It contains multiple copies of three enzymatic components: pyruvate dehydrogenase (E1), dihydrolipoamide acetyltransferase (E2) and lipoamide dehydrogenase (E3). This Cyanidium caldarium (Red alga) protein is Pyruvate dehydrogenase E1 component subunit beta (pdhB).